The primary structure comprises 226 residues: Probable transaldolase (226 aa).

The active-site Schiff-base intermediate with substrate is the Lys-91.

Belongs to the transaldolase family. Type 3B subfamily.

The protein localises to the cytoplasm. It carries out the reaction D-sedoheptulose 7-phosphate + D-glyceraldehyde 3-phosphate = D-erythrose 4-phosphate + beta-D-fructose 6-phosphate. It participates in carbohydrate degradation; pentose phosphate pathway; D-glyceraldehyde 3-phosphate and beta-D-fructose 6-phosphate from D-ribose 5-phosphate and D-xylulose 5-phosphate (non-oxidative stage): step 2/3. Functionally, transaldolase is important for the balance of metabolites in the pentose-phosphate pathway. This is Probable transaldolase from Chlorobium phaeobacteroides (strain DSM 266 / SMG 266 / 2430).